A 443-amino-acid polypeptide reads, in one-letter code: Threonine/serine transporter TdcC (443 aa).

The next 11 membrane-spanning stretches (helical) occupy residues Thr22–Ile42, Ala44–Phe64, Gly97–Val117, Phe140–Met160, Val163–Ile183, Ile207–Ile227, Ala259–Ser279, Ala319–Leu339, Ile366–Leu386, Ile389–Ile409, and Glu423–Phe443.

The protein belongs to the amino acid/polyamine transporter 2 family. SdaC/TdcC subfamily.

Its subcellular location is the cell inner membrane. The catalysed reaction is L-threonine(in) + H(+)(in) = L-threonine(out) + H(+)(out). It carries out the reaction L-serine(in) + H(+)(in) = L-serine(out) + H(+)(out). Its function is as follows. Involved in the import of threonine and serine into the cell, with the concomitant import of a proton (symport system). The polypeptide is Threonine/serine transporter TdcC (Enterobacter sp. (strain 638)).